Here is a 166-residue protein sequence, read N- to C-terminus: Protein C2-DOMAIN ABA-RELATED 11 (166 aa).

Residue methionine 1 is modified to N-acetylmethionine. The 103-residue stretch at 1 to 103 (MGEPLGLLQV…ISVARLRHVV (103 aa)) folds into the C2 domain. Glycine 2 carries the N-acetylglycine; in Protein C2-DOMAIN ABA-RELATED 11, N-terminally processed modification. 7 residues coordinate Ca(2+): arginine 21, aspartate 22, aspartate 27, aspartate 73, lysine 74, aspartate 75, and aspartate 81.

Belongs to the plant CAR protein family. In terms of assembly, binds to PYR/PYL/RCAR abscisic acid intracellular receptors in an ABA-independent manner, both at the plasma membrane and in the nucleus.

The protein localises to the cell membrane. Its subcellular location is the nucleus. In terms of biological role, stimulates the GTPase/ATPase activities of Obg-like ATPases. Mediates the transient calcium-dependent interaction of PYR/PYL/RCAR abscisic acid (ABA) receptors with the plasma membrane and thus regulates ABA sensitivity. This is Protein C2-DOMAIN ABA-RELATED 11 from Arabidopsis thaliana (Mouse-ear cress).